The following is a 192-amino-acid chain: MKLLEERIRKDGEVLDGNVLKINSFLNHQVDPQLMMEVGKEFKRLFENEKITKVLTCEASGIAPGIMAAYQLGVPMVFARKKKPSTLNDAVYWADVFSYTKKVNNKICVEKKFLSSDDHLLIIDDFLAHGEAVKGMLNIADQANATVAGVGVVVAKEFQGGSEWVKDHGYSLEALARISDFENNQVHFVGEE.

Residues leucine 20 and asparagine 27 each coordinate xanthine. A 5-phospho-alpha-D-ribose 1-diphosphate-binding site is contributed by 128 to 132 (AHGEA). A xanthine-binding site is contributed by lysine 156.

The protein belongs to the purine/pyrimidine phosphoribosyltransferase family. Xpt subfamily. In terms of assembly, homodimer.

Its subcellular location is the cytoplasm. The catalysed reaction is XMP + diphosphate = xanthine + 5-phospho-alpha-D-ribose 1-diphosphate. It participates in purine metabolism; XMP biosynthesis via salvage pathway; XMP from xanthine: step 1/1. Functionally, converts the preformed base xanthine, a product of nucleic acid breakdown, to xanthosine 5'-monophosphate (XMP), so it can be reused for RNA or DNA synthesis. This is Xanthine phosphoribosyltransferase from Lactobacillus johnsonii (strain CNCM I-12250 / La1 / NCC 533).